Reading from the N-terminus, the 526-residue chain is Probable feruloyl esterase B-2 (526 aa).

An N-terminal signal peptide occupies residues 1–18 (MTKLSLLPLLTLASAVLA). 2 disulfides stabilise this stretch: Cys27/Cys74 and Cys62/Cys113. N-linked (GlcNAc...) asparagine glycosylation occurs at Asn52. The N-linked (GlcNAc...) asparagine glycan is linked to Asn137. Intrachain disulfides connect Cys186/Cys441, Cys255/Cys272, Cys281/Cys291, and Cys503/Cys525. Ser187 (acyl-ester intermediate) is an active-site residue. The N-linked (GlcNAc...) asparagine glycan is linked to Asn233. Residues Asp256, Asp259, Ala261, Asp263, and Ile265 each contribute to the Ca(2+) site. Residue Asn311 is glycosylated (N-linked (GlcNAc...) asparagine). Catalysis depends on charge relay system residues Asp400 and His440. Asn516 carries N-linked (GlcNAc...) asparagine glycosylation.

It belongs to the tannase family.

It localises to the secreted. It catalyses the reaction feruloyl-polysaccharide + H2O = ferulate + polysaccharide.. Functionally, involved in degradation of plant cell walls. Hydrolyzes the feruloyl-arabinose ester bond in arabinoxylans as well as the feruloyl-galactose and feruloyl-arabinose ester bonds in pectin. The polypeptide is Probable feruloyl esterase B-2 (faeB-2) (Aspergillus fumigatus (strain CBS 144.89 / FGSC A1163 / CEA10) (Neosartorya fumigata)).